The sequence spans 71 residues: ATP synthase subunit c (71 aa).

2 helical membrane passes run 5–25 (GAAI…AIIV) and 47–67 (FIGV…GFLI).

Belongs to the ATPase C chain family. F-type ATPases have 2 components, F(1) - the catalytic core - and F(0) - the membrane proton channel. F(1) has five subunits: alpha(3), beta(3), gamma(1), delta(1), epsilon(1). F(0) has three main subunits: a(1), b(2) and c(10-14). The alpha and beta chains form an alternating ring which encloses part of the gamma chain. F(1) is attached to F(0) by a central stalk formed by the gamma and epsilon chains, while a peripheral stalk is formed by the delta and b chains.

The protein resides in the cell membrane. Functionally, f(1)F(0) ATP synthase produces ATP from ADP in the presence of a proton or sodium gradient. F-type ATPases consist of two structural domains, F(1) containing the extramembraneous catalytic core and F(0) containing the membrane proton channel, linked together by a central stalk and a peripheral stalk. During catalysis, ATP synthesis in the catalytic domain of F(1) is coupled via a rotary mechanism of the central stalk subunits to proton translocation. Key component of the F(0) channel; it plays a direct role in translocation across the membrane. A homomeric c-ring of between 10-14 subunits forms the central stalk rotor element with the F(1) delta and epsilon subunits. The polypeptide is ATP synthase subunit c (Alkalihalobacillus alcalophilus (Bacillus alcalophilus)).